A 99-amino-acid polypeptide reads, in one-letter code: Protein IDA-LIKE 3 (99 aa).

The N-terminal stretch at 1–32 (MSSRSHRSRKYQLTRTIPILVLLLVLLSCCNG) is a signal peptide. Polar residues predominate over residues 36-45 (TNVFNTSSPP). 2 disordered regions span residues 36 to 58 (TNVF…HDHV) and 73 to 99 (SLPR…STKT). Residues 46-58 (KQKDVVSPPHDHV) are compositionally biased toward basic and acidic residues.

Expressed in flowers and seedlings. Detected at the base of pedicel, in the floral abscission zone and in vascular tissues.

The protein resides in the secreted. It is found in the extracellular space. Functionally, may be involved in floral abscission. The protein is Protein IDA-LIKE 3 (IDL3) of Arabidopsis thaliana (Mouse-ear cress).